The primary structure comprises 631 residues: Mitochondrial Rho GTPase (631 aa).

Residues 1 to 605 are Cytoplasmic-facing; it reads MRAGRVRPLR…TQADLKSSTF (605 aa). The Miro 1 domain occupies 15–181; sequence KKDVRILLVG…FYYAQKAVLH (167 aa). Residues Arg-27, Gly-29, Lys-30, Thr-31, and Ser-32 each coordinate GTP. Residue Thr-31 participates in Mg(2+) binding. Asp-70 contributes to the Mg(2+) binding site. Residue Ser-72 participates in GTP binding. An N6-acetyllysine modification is found at Lys-105. The GTP site is built by Asn-131, Lys-132, Asp-134, Ala-162, and Lys-163. Lys-166 is covalently cross-linked (Glycyl lysine isopeptide (Lys-Gly) (interchain with G-Cter in ubiquitin)). One can recognise an EF-hand 1 domain in the interval 197–232; sequence ACIKALTRIFKISDQDNDGTLNDAELNFFQRICFNT. Residues Asp-210, Asp-212, Asp-214, Thr-216, and Glu-221 each contribute to the Ca(2+) site. Residue Lys-248 forms a Glycyl lysine isopeptide (Lys-Gly) (interchain with G-Cter in ubiquitin) linkage. The EF-hand 2 domain occupies 317–352; it reads HAYLFLQSTFDKHDLDRDCALSPDELKDLFQVFPYI. 5 residues coordinate Ca(2+): Asp-330, Asp-332, Asp-334, Ala-336, and Glu-341. The Miro 2 domain maps to 429 to 592; the sequence is RNVFRCNVIG…FVKLTTMAMY (164 aa). Positions 441, 442, 443, 444, 445, 446, 460, 541, 543, 571, and 572 each coordinate GTP. Gly-441 serves as a coordination point for Mg(2+). Lys-585 participates in a covalent cross-link: Glycyl lysine isopeptide (Lys-Gly) (interchain with G-Cter in ubiquitin). Residues 606 to 628 form a helical; Anchor for type IV membrane protein membrane-spanning segment; that stretch reads WLRASFGATVFAVVGFAMYRALL. Residues 629 to 631 lie on the Mitochondrial intermembrane side of the membrane; the sequence is KQR.

Belongs to the mitochondrial Rho GTPase family. As to quaternary structure, homodimer. Interacts with the kinesin-binding proteins TRAK1/OIP106 and TRAK2/GRIF1, forming a link between mitochondria and the trafficking apparatus of the microtubules. Interacts with RAP1GDS1. Interacts with ARMCX1. Found in a complex with KIF5B, OGT, RHOT2 and TRAK1. Ubiquitinated by PRKN during mitophagy, leading to its degradation and enhancement of mitophagy. Deubiquitinated by USP30. In terms of processing, acetylation on Lys-105 decreases sensitivity of mitochondrial transport to elevated Ca(2+) levels, increases mitochondrial transport and promotes axon growth. Deacetylated by HDAC6 which blocks mitochondrial transport and mediates axon growth inhibition.

It is found in the mitochondrion outer membrane. It catalyses the reaction GTP + H2O = GDP + phosphate + H(+). The catalysed reaction is ATP + H2O = ADP + phosphate + H(+). The enzyme catalyses UTP + H2O = UDP + phosphate + H(+). Its function is as follows. Atypical mitochondrial nucleoside-triphosphatase (NTPase) involved in mitochondrial trafficking. Probably involved in control of anterograde transport of mitochondria and their subcellular distribution. Promotes mitochondrial fission during high calcium conditions. Can hydrolyze GTP, ATP and UTP. In Rattus norvegicus (Rat), this protein is Mitochondrial Rho GTPase.